The following is a 745-amino-acid chain: Immunoglobulin superfamily containing leucine-rich repeat protein 2 (745 aa).

The signal sequence occupies residues M1 to G18. An LRRNT domain is found at S19 to A51. At S19–S589 the chain is on the extracellular side. N52 carries an N-linked (GlcNAc...) asparagine glycan. LRR repeat units lie at residues N52–D73, Q76–V97, Q100–S123, A124–A145, and D148–A169. N121 carries N-linked (GlcNAc...) asparagine glycosylation. The LRRCT domain occupies N181–P232. The Ig-like domain maps to P233–A371. C260 and C355 form a disulfide bridge. A disordered region spans residues V287–P326. Positions G290–G306 are enriched in acidic residues. 2 N-linked (GlcNAc...) asparagine glycosylation sites follow: N337 and N364. The segment at T375 to R466 is disordered. The segment covering T431–I449 has biased composition (acidic residues). N-linked (GlcNAc...) asparagine glycosylation is found at N474 and N563. A helical transmembrane segment spans residues L590–G610. Residues A611–G745 are Cytoplasmic-facing. Positions K656–R722 are disordered. Over residues G665–Q683 the composition is skewed to acidic residues. The residue at position 719 (Y719) is a Phosphotyrosine. Position 720 is a phosphoserine (S720).

In terms of assembly, homomultimer. Interacts with NTRK1/TrkA.

The protein localises to the cell membrane. In terms of biological role, required for axon extension during neural development. The protein is Immunoglobulin superfamily containing leucine-rich repeat protein 2 (ISLR2) of Homo sapiens (Human).